The chain runs to 308 residues: uncharacterized protein (308 aa).

The helical transmembrane segment at 191–211 (YLCLNLPYIIVALTLVPYSLV) threads the bilayer.

The protein resides in the host membrane. This is an uncharacterized protein from Saccharolobus islandicus (Sulfolobus islandicus).